Here is a 257-residue protein sequence, read N- to C-terminus: UPF0246 protein lpg1366 (257 aa).

Belongs to the UPF0246 family.

This is UPF0246 protein lpg1366 from Legionella pneumophila subsp. pneumophila (strain Philadelphia 1 / ATCC 33152 / DSM 7513).